Reading from the N-terminus, the 645-residue chain is Glucans biosynthesis glucosyltransferase H (645 aa).

Residues 1–28 (MDGTVTLSPAPTDLPPVSSLDAGQPTLP) form a disordered region. A run of 7 helical transmembrane segments spans residues 64–84 (LIGG…SVLW), 98–118 (LFVL…AGFI), 423–443 (APMW…GAGI), 465–485 (AIWI…LGYI), 504–524 (ALSI…VMYL), 558–578 (SYGG…LVSP), and 580–600 (LAAW…VVAV).

It belongs to the glycosyltransferase 2 family. OpgH subfamily.

It localises to the cell inner membrane. The protein operates within glycan metabolism; osmoregulated periplasmic glucan (OPG) biosynthesis. In terms of biological role, involved in the biosynthesis of osmoregulated periplasmic glucans (OPGs). The protein is Glucans biosynthesis glucosyltransferase H of Xanthomonas campestris pv. campestris (strain B100).